The chain runs to 146 residues: Large ribosomal subunit protein uL15 (146 aa).

The span at 1 to 13 shows a compositional bias: basic and acidic residues; the sequence is MKLHELKAAEGSR. The interval 1–51 is disordered; that stretch reads MKLHELKAAEGSRKVRNRVGRGTSSGNGKTSGRGQKGQKARSGGGVRLGFE. Gly residues-rich tracts occupy residues 23–35 and 42–51; these read TSSGNGKTSGRGQ and SGGGVRLGFE.

It belongs to the universal ribosomal protein uL15 family. Part of the 50S ribosomal subunit.

Its function is as follows. Binds to the 23S rRNA. This Streptococcus pyogenes serotype M1 protein is Large ribosomal subunit protein uL15.